We begin with the raw amino-acid sequence, 271 residues long: Aquaporin-1 (271 aa).

The Cytoplasmic portion of the chain corresponds to 1-11; it reads MASEFKKKLFW. The helical transmembrane segment at 12 to 29 threads the bilayer; sequence RAVVAEFLAMILFIFISI. At 30-48 the chain is on the extracellular side; it reads GSALGFHYPIKSNQTTGAV. An N-linked (GlcNAc...) asparagine glycan is attached at Asn-42. The chain crosses the membrane as a helical span at residues 49–67; sequence QDNVKVSLAFGLSIATLAQ. Residues 68–70 lie on the Cytoplasmic side of the membrane; the sequence is SVG. The stretch at 71–84 is an intramembrane region; that stretch reads HISGAHLNPAVTLG. The short motif at 78–80 is the NPA 1 element; that stretch reads NPA. At 85–92 the chain is on the cytoplasmic side; sequence LLLSCQIS. Residues 93-111 traverse the membrane as a helical segment; that stretch reads VLRAIMYIIAQCVGAIVAT. The Extracellular portion of the chain corresponds to 112 to 135; that stretch reads AILSGITSSLPDNSLGLNALAPGV. A helical transmembrane segment spans residues 136–155; it reads NSGQGLGIEIIGTLQLVLCV. Residues 156 to 165 lie on the Cytoplasmic side of the membrane; sequence LATTDRRRRD. A helical transmembrane segment spans residues 166–183; it reads LGGSGPLAIGFSVALGHL. The Extracellular segment spans residues 184–188; sequence LAIDY. Residues 189–201 lie within the membrane without spanning it; the sequence is TGCGINPARSFGS. An NPA 2 motif is present at residues 194-196; it reads NPA. Residues 202–208 lie on the Extracellular side of the membrane; it reads SVITHNF. A helical transmembrane segment spans residues 209–226; that stretch reads QDHWIFWVGPFIGAALAV. Residues 227-271 lie on the Cytoplasmic side of the membrane; sequence LIYDFILAPRSSDLTDRVKVWTSGQVEEYDLDADDINSRVEMKPK. A Phosphoserine modification is found at Ser-249. Tyr-255 carries the phosphotyrosine modification. Position 264 is a phosphoserine (Ser-264).

This sequence belongs to the MIP/aquaporin (TC 1.A.8) family. Homotetramer; each monomer provides an independent water pore. Component of the ankyrin-1 complex in the erythrocyte, composed of ANK1, RHCE, RHAG, SLC4A1, EPB42, GYPA, GYPB and AQP1. Interacts with EPHB2; involved in endolymph production in the inner ear. Identified in a complex with STOM. Interacts (via the N-terminal) with ANK1 (via ANK 1-5 repeats). Interacts (via the C-terminal) with EPB42.

It is found in the cell membrane. It carries out the reaction H2O(in) = H2O(out). The catalysed reaction is nitric oxide(out) = nitric oxide(in). It catalyses the reaction CO2(out) = CO2(in). The enzyme catalyses glycerol(in) = glycerol(out). It carries out the reaction H2O2(out) = H2O2(in). The catalysed reaction is K(+)(in) = K(+)(out). It catalyses the reaction Na(+)(in) = Na(+)(out). In terms of biological role, forms a water channel that facilitates the transport of water across cell membranes, playing a crucial role in water homeostasis in various tissues. Could also be permeable to small solutes including hydrogen peroxide, glycerol and gases such as amonnia (NH3), nitric oxide (NO) and carbon dioxide (CO2). Recruited to the ankyrin-1 complex, a multiprotein complex of the erythrocyte membrane, it could be part of a CO2 metabolon, linking facilitated diffusion of CO2 across the membrane, anion exchange of Cl(-)/HCO3(-) and interconversion of dissolved CO2 and carbonic acid in the cytosol. In vitro, it shows non-selective gated cation channel activity and may be permeable to cations like K(+) and Na(+) in vivo. The sequence is that of Aquaporin-1 from Bos taurus (Bovine).